Consider the following 527-residue polypeptide: Berberine bridge enzyme-like 10 (527 aa).

A signal peptide spans 1–20 (MEKLLVISLLLLISTSVTTS). A disulfide bridge connects residues Cys32 and Cys95. An N-linked (GlcNAc...) asparagine glycan is attached at Asn53. An FAD-binding PCMH-type domain is found at 73-248 (TTPKPISVVA…LGYKIQLVPV (176 aa)). At His110 the chain carries Pros-8alpha-FAD histidine. Asn137 and Asn293 each carry an N-linked (GlcNAc...) asparagine glycan.

The protein belongs to the oxygen-dependent FAD-linked oxidoreductase family. It depends on FAD as a cofactor.

The protein resides in the secreted. Its subcellular location is the cell wall. The chain is Berberine bridge enzyme-like 10 from Arabidopsis thaliana (Mouse-ear cress).